The following is a 402-amino-acid chain: GPI mannosyltransferase 1 (402 aa).

10 helical membrane passes run 5 to 25, 79 to 99, 108 to 128, 162 to 182, 191 to 211, 238 to 258, 260 to 280, 309 to 329, 333 to 353, and 365 to 385; these read VILL…YGIF, WIHM…VMII, LTKQ…ITIS, LSIH…IYLL, IWRL…PTYF, FSIW…SQSI, LSKL…YLLW, QYFI…TITW, VVCI…AYLL, and LFFG…VFIT.

It belongs to the PIGM family.

It localises to the endoplasmic reticulum membrane. The protein operates within glycolipid biosynthesis; glycosylphosphatidylinositol-anchor biosynthesis. Mannosyltransferase involved in glycosylphosphatidylinositol-anchor biosynthesis. Transfers the first alpha-1,4-mannose to GlcN-acyl-PI during GPI precursor assembly. Required for cell wall integrity. The sequence is that of GPI mannosyltransferase 1 (GPI14) from Kluyveromyces lactis (strain ATCC 8585 / CBS 2359 / DSM 70799 / NBRC 1267 / NRRL Y-1140 / WM37) (Yeast).